The sequence spans 242 residues: DNA repair protein RecO (242 aa).

This sequence belongs to the RecO family.

Its function is as follows. Involved in DNA repair and RecF pathway recombination. In Laribacter hongkongensis (strain HLHK9), this protein is DNA repair protein RecO.